We begin with the raw amino-acid sequence, 417 residues long: Phosphoribosylamine--glycine ligase (417 aa).

One can recognise an ATP-grasp domain in the interval 107-313 (KQIMAKYEIP…FLEIIEATLE (207 aa)). Residue 133 to 194 (LKETWYPVVI…EEMLYGKEAS (62 aa)) participates in ATP binding. Mg(2+) contacts are provided by Glu283 and Asn285.

Belongs to the GARS family. Requires Mg(2+) as cofactor. The cofactor is Mn(2+).

It catalyses the reaction 5-phospho-beta-D-ribosylamine + glycine + ATP = N(1)-(5-phospho-beta-D-ribosyl)glycinamide + ADP + phosphate + H(+). It participates in purine metabolism; IMP biosynthesis via de novo pathway; N(1)-(5-phospho-D-ribosyl)glycinamide from 5-phospho-alpha-D-ribose 1-diphosphate: step 2/2. The chain is Phosphoribosylamine--glycine ligase from Caldanaerobacter subterraneus subsp. tengcongensis (strain DSM 15242 / JCM 11007 / NBRC 100824 / MB4) (Thermoanaerobacter tengcongensis).